The following is a 73-amino-acid chain: Toxin Td12 (73 aa).

A signal peptide spans 1–7 (IGMVIEC). One can recognise an LCN-type CS-alpha/beta domain in the interval 8–70 (KDGYLMEPNG…TWDRATNTCG (63 aa)). 4 cysteine pairs are disulfide-bonded: Cys-18–Cys-69, Cys-22–Cys-44, Cys-30–Cys-50, and Cys-34–Cys-52. Arginine amide is present on Arg-71.

It belongs to the long (4 C-C) scorpion toxin superfamily. Sodium channel inhibitor family. Beta subfamily. As to expression, expressed by the venom gland.

Its subcellular location is the secreted. Functionally, beta toxins bind voltage-independently at site-4 of sodium channels (Nav) and shift the voltage of activation toward more negative potentials thereby affecting sodium channel activation and promoting spontaneous and repetitive firing. The polypeptide is Toxin Td12 (Tityus discrepans (Venezuelan scorpion)).